The primary structure comprises 155 residues: Protein-export protein SecB (155 aa).

This sequence belongs to the SecB family. Homotetramer, a dimer of dimers. One homotetramer interacts with 1 SecA dimer.

It is found in the cytoplasm. In terms of biological role, one of the proteins required for the normal export of preproteins out of the cell cytoplasm. It is a molecular chaperone that binds to a subset of precursor proteins, maintaining them in a translocation-competent state. It also specifically binds to its receptor SecA. In Citrobacter koseri (strain ATCC BAA-895 / CDC 4225-83 / SGSC4696), this protein is Protein-export protein SecB.